A 765-amino-acid polypeptide reads, in one-letter code: Palmitoyltransferase ZDHHC8 (765 aa).

Over 1-13 (MPRSPGTRLKPAK) the chain is Cytoplasmic. A helical membrane pass occupies residues 14-34 (YIPVATAAALLVGSSTLFFVF). Residues 35 to 52 (TCPWLTRAVSPAVPVYNG) lie on the Lumenal side of the membrane. A helical membrane pass occupies residues 53 to 73 (IIFLFVLANFSMATFMDPGVF). At 74 to 148 (PRADEDEDKE…NCIGRRNYRY (75 aa)) the chain is on the cytoplasmic side. The region spanning 104–154 (KWCATCHFYRPPRCSHCSVCDNCVEDFDHHCPWVNNCIGRRNYRYFFLFLL) is the DHHC domain. Cysteine 134 (S-palmitoyl cysteine intermediate) is an active-site residue. Residues 149-169 (FFLFLLSLSAHMVGVVAFGLV) traverse the membrane as a helical segment. Residues 170-190 (YVLNHAEGLGAAHTTITMAVM) lie on the Lumenal side of the membrane. A helical transmembrane segment spans residues 191 to 211 (CVAGLFFIPVIGLTGFHVVLV). The Cytoplasmic portion of the chain corresponds to 212–765 (TRGRTTNEQV…VGGTTYEISV (554 aa)). Residues 293–352 (GLGRSKSKGSLDRLDEKPLDLGPPLPPKIEAGTFSSDLQTPRPGSAESALSVQRTSPPTP) are disordered. Residues 301-311 (GSLDRLDEKPL) show a composition bias toward basic and acidic residues. Serine 337 is modified (phosphoserine). At arginine 441 the chain carries Omega-N-methylarginine. Residues 509 to 540 (LHPGATGDPPRPLPRSFSPVLGPRPREPSPVR) form a disordered region. Serine 606, serine 627, serine 675, serine 682, serine 725, and serine 743 each carry phosphoserine. The tract at residues 613–747 (GPGFGGARNP…PGPSASPTRH (135 aa)) is disordered. Over residues 622–653 (PALQTSLSSLSSSVSRAPRTSSSSLQADQASS) the composition is skewed to low complexity.

It belongs to the DHHC palmitoyltransferase family. ERF2/ZDHHC9 subfamily. As to expression, widely expressed.

It localises to the golgi apparatus membrane. The protein localises to the mitochondrion membrane. The enzyme catalyses L-cysteinyl-[protein] + hexadecanoyl-CoA = S-hexadecanoyl-L-cysteinyl-[protein] + CoA. Functionally, palmitoyltransferase that catalyzes the addition of palmitate onto various protein substrates and therefore functions in several unrelated biological processes. Through the palmitoylation of ABCA1 regulates the localization of the transporter to the plasma membrane and thereby regulates its function in cholesterol and phospholipid efflux. Could also pamitoylate the D(2) dopamine receptor DRD2 and regulate its stability and localization to the plasma membrane. Could also play a role in glutamatergic transmission. (Microbial infection) Able to palmitoylate SARS coronavirus-2/SARS-CoV-2 spike protein following its synthesis in the endoplasmic reticulum (ER). In the infected cell, promotes spike biogenesis by protecting it from premature ER degradation, increases half-life and controls the lipid organization of its immediate membrane environment. Once the virus has formed, spike palmitoylation controls fusion with the target cell. This Homo sapiens (Human) protein is Palmitoyltransferase ZDHHC8.